The chain runs to 237 residues: Ribosomal RNA small subunit methyltransferase G (237 aa).

S-adenosyl-L-methionine is bound by residues glycine 78, phenylalanine 83, 129–130 (AE), and arginine 148. Residues 218–237 (KKETPNKYPRKAGMPNKRPL) are disordered.

Belongs to the methyltransferase superfamily. RNA methyltransferase RsmG family.

Its subcellular location is the cytoplasm. In terms of biological role, specifically methylates the N7 position of a guanine in 16S rRNA. This chain is Ribosomal RNA small subunit methyltransferase G, found in Streptococcus pneumoniae (strain JJA).